The following is a 436-amino-acid chain: 3-ketoacyl-CoA thiolase (436 aa).

The active-site Acyl-thioester intermediate is C99. Catalysis depends on proton acceptor residues H392 and C422.

This sequence belongs to the thiolase-like superfamily. Thiolase family. Heterotetramer of two alpha chains (FadJ) and two beta chains (FadI).

The protein localises to the cytoplasm. The catalysed reaction is an acyl-CoA + acetyl-CoA = a 3-oxoacyl-CoA + CoA. It participates in lipid metabolism; fatty acid beta-oxidation. In terms of biological role, catalyzes the final step of fatty acid oxidation in which acetyl-CoA is released and the CoA ester of a fatty acid two carbons shorter is formed. This chain is 3-ketoacyl-CoA thiolase, found in Shigella boydii serotype 4 (strain Sb227).